Consider the following 318-residue polypeptide: Thymidylate synthase (318 aa).

Residues arginine 25 and 180-181 (RR) contribute to the dUMP site. Cysteine 200 serves as the catalytic Nucleophile. Residues 220–223 (RSAD), asparagine 231, and 261–263 (HIY) contribute to the dUMP site. Aspartate 223 is a binding site for (6R)-5,10-methylene-5,6,7,8-tetrahydrofolate. Alanine 317 lines the (6R)-5,10-methylene-5,6,7,8-tetrahydrofolate pocket.

The protein belongs to the thymidylate synthase family. Bacterial-type ThyA subfamily. In terms of assembly, homodimer.

The protein resides in the cytoplasm. The catalysed reaction is dUMP + (6R)-5,10-methylene-5,6,7,8-tetrahydrofolate = 7,8-dihydrofolate + dTMP. It functions in the pathway pyrimidine metabolism; dTTP biosynthesis. Catalyzes the reductive methylation of 2'-deoxyuridine-5'-monophosphate (dUMP) to 2'-deoxythymidine-5'-monophosphate (dTMP) while utilizing 5,10-methylenetetrahydrofolate (mTHF) as the methyl donor and reductant in the reaction, yielding dihydrofolate (DHF) as a by-product. This enzymatic reaction provides an intracellular de novo source of dTMP, an essential precursor for DNA biosynthesis. The polypeptide is Thymidylate synthase (Ligilactobacillus salivarius (strain UCC118) (Lactobacillus salivarius)).